Here is a 422-residue protein sequence, read N- to C-terminus: Inhibitory synaptic factor 2A (422 aa).

The tract at residues 143–163 (FLADSKEKSEAGPMEEPRPCS) is disordered. The segment covering 146 to 160 (DSKEKSEAGPMEEPR) has biased composition (basic and acidic residues). Phosphoserine is present on Ser177. Residues 344–370 (TEVVDLKAQLQVMENLISSSQETIKVL) adopt a coiled-coil conformation.

This sequence belongs to the INSYN2 family. As to quaternary structure, interacts with GPHN.

Its subcellular location is the postsynaptic density. Component of the protein machinery at the inhibitory synapses, probably acting as a scaffold. Inhibitory synapses dampen neuronal activity through postsynaptic hyperpolarization. This synaptic inhibition is fundamental for the functioning of the central nervous system, shaping and orchestrating the flow of information through neuronal networks to generate a precise neural code. This chain is Inhibitory synaptic factor 2A, found in Mus musculus (Mouse).